The chain runs to 473 residues: Kremen protein 1 (473 aa).

The signal sequence occupies residues M1–A19. The Extracellular portion of the chain corresponds to R21–T392. The 84-residue stretch at E31–C114 folds into the Kringle domain. 8 cysteine pairs are disulfide-bonded: C32-C114, C55-C95, C84-C109, C122-C186, C147-C167, C151-C169, C190-C198, and C214-C240. The N-linked (GlcNAc...) asparagine glycan is linked to N59. In terms of domain architecture, WSC spans M116–L210. A CUB domain is found at C214 to T321. 5 N-linked (GlcNAc...) asparagine glycosylation sites follow: N217, N255, N293, N333, and N345. Residues V393–L413 form a helical membrane-spanning segment. The Cytoplasmic segment spans residues H414–D473. Residues H414–D473 form an essential for apoptotic activity region.

Forms a ternary complex with DKK1 and LRP6. Interacts with LRP6 in a DKK1-dependent manner. Interacts with DKK1 and RSPO1 (via FU repeats).

It localises to the cell membrane. In terms of biological role, receptor for Dickkopf proteins. Cooperates with DKK1/2 to inhibit Wnt/beta-catenin signaling by promoting the endocytosis of Wnt receptors LRP5 and LRP6. In the absence of DKK1, potentiates Wnt-beta-catenin signaling by maintaining LRP5 or LRP6 at the cell membrane. Can trigger apoptosis in a Wnt-independent manner and this apoptotic activity is inhibited upon binding of the ligand DKK1. Plays a role in limb development; attenuates Wnt signaling in the developing limb to allow normal limb patterning and can also negatively regulate bone formation. Modulates cell fate decisions in the developing cochlea with an inhibitory role in hair cell fate specification. The protein is Kremen protein 1 (Kremen1) of Rattus norvegicus (Rat).